Here is a 142-residue protein sequence, read N- to C-terminus: Large ribosomal subunit protein uL11 (142 aa).

It belongs to the universal ribosomal protein uL11 family. Part of the ribosomal stalk of the 50S ribosomal subunit. Interacts with L10 and the large rRNA to form the base of the stalk. L10 forms an elongated spine to which L12 dimers bind in a sequential fashion forming a multimeric L10(L12)X complex. In terms of processing, one or more lysine residues are methylated.

Functionally, forms part of the ribosomal stalk which helps the ribosome interact with GTP-bound translation factors. The protein is Large ribosomal subunit protein uL11 of Glaesserella parasuis serovar 5 (strain SH0165) (Haemophilus parasuis).